The following is a 349-amino-acid chain: Probable dual-specificity RNA methyltransferase RlmN (349 aa).

E93 (proton acceptor) is an active-site residue. The Radical SAM core domain maps to 99–329; it reads YKHGNTICVS…TTIRREMGSD (231 aa). C106 and C334 are joined by a disulfide. C113, C117, and C120 together coordinate [4Fe-4S] cluster. S-adenosyl-L-methionine is bound by residues 160 to 161, S192, 215 to 217, and N291; these read GE and SLH. Residue C334 is the S-methylcysteine intermediate of the active site.

This sequence belongs to the radical SAM superfamily. RlmN family. [4Fe-4S] cluster serves as cofactor.

The protein localises to the cytoplasm. It catalyses the reaction adenosine(2503) in 23S rRNA + 2 reduced [2Fe-2S]-[ferredoxin] + 2 S-adenosyl-L-methionine = 2-methyladenosine(2503) in 23S rRNA + 5'-deoxyadenosine + L-methionine + 2 oxidized [2Fe-2S]-[ferredoxin] + S-adenosyl-L-homocysteine. The enzyme catalyses adenosine(37) in tRNA + 2 reduced [2Fe-2S]-[ferredoxin] + 2 S-adenosyl-L-methionine = 2-methyladenosine(37) in tRNA + 5'-deoxyadenosine + L-methionine + 2 oxidized [2Fe-2S]-[ferredoxin] + S-adenosyl-L-homocysteine. In terms of biological role, specifically methylates position 2 of adenine 2503 in 23S rRNA and position 2 of adenine 37 in tRNAs. This is Probable dual-specificity RNA methyltransferase RlmN from Clostridium tetani (strain Massachusetts / E88).